A 451-amino-acid chain; its full sequence is UDP-N-acetylmuramoylalanine--D-glutamate ligase (451 aa).

ATP is bound at residue 118 to 124; it reads GTKGKST.

It belongs to the MurCDEF family.

The protein localises to the cytoplasm. The catalysed reaction is UDP-N-acetyl-alpha-D-muramoyl-L-alanine + D-glutamate + ATP = UDP-N-acetyl-alpha-D-muramoyl-L-alanyl-D-glutamate + ADP + phosphate + H(+). The protein operates within cell wall biogenesis; peptidoglycan biosynthesis. In terms of biological role, cell wall formation. Catalyzes the addition of glutamate to the nucleotide precursor UDP-N-acetylmuramoyl-L-alanine (UMA). The sequence is that of UDP-N-acetylmuramoylalanine--D-glutamate ligase (murD) from Borreliella burgdorferi (strain ATCC 35210 / DSM 4680 / CIP 102532 / B31) (Borrelia burgdorferi).